We begin with the raw amino-acid sequence, 196 residues long: Chromophore lyase CpcS/CpeS 2 (196 aa).

The protein belongs to the CpcS/CpeS biliprotein lyase family.

Covalently attaches a chromophore to Cys residue(s) of phycobiliproteins. The chain is Chromophore lyase CpcS/CpeS 2 from Trichodesmium erythraeum (strain IMS101).